A 226-amino-acid polypeptide reads, in one-letter code: ATP synthase subunit a (226 aa).

The next 5 membrane-spanning stretches (helical) occupy residues 17-37 (FNYL…AKLA), 79-99 (LVAT…IPGF), 105-125 (SLNL…FEGI), 168-188 (FGNI…APWV), and 200-222 (MALL…AVVV).

The protein belongs to the ATPase A chain family. In terms of assembly, F-type ATPases have 2 components, CF(1) - the catalytic core - and CF(0) - the membrane proton channel. CF(1) has five subunits: alpha(3), beta(3), gamma(1), delta(1), epsilon(1). CF(0) has three main subunits: a(1), b(2) and c(9-12). The alpha and beta chains form an alternating ring which encloses part of the gamma chain. CF(1) is attached to CF(0) by a central stalk formed by the gamma and epsilon chains, while a peripheral stalk is formed by the delta and b chains.

The protein resides in the cell inner membrane. Its function is as follows. Key component of the proton channel; it plays a direct role in the translocation of protons across the membrane. The chain is ATP synthase subunit a from Campylobacter fetus subsp. fetus (strain 82-40).